A 264-amino-acid chain; its full sequence is Forkhead box protein pes-1 (264 aa).

Disordered stretches follow at residues 15–36 and 50–93; these read DLDN…GNSK and DSST…PTKR. A compositionally biased stretch (low complexity) spans 50 to 64; it reads DSSTSSSCSVSPASS. Residues 70–89 show a composition bias toward polar residues; the sequence is ESVGQQQSGRNSPVSSSTES. The segment at residues 93-186 is a DNA-binding region (fork-head); the sequence is RPKYSYNALI…ISNNCGKLRR (94 aa).

The protein localises to the nucleus. It is found in the cytoplasm. Transcription factor. Plays a role in embryogenesis and later development, perhaps acting redundantly with forkhead protein fkh-2. This Caenorhabditis elegans protein is Forkhead box protein pes-1.